We begin with the raw amino-acid sequence, 456 residues long: D-glycerate 3-kinase, chloroplastic (456 aa).

Residues Met1–Ser63 constitute a chloroplast transit peptide. Ala215 to Thr222 provides a ligand contact to ATP.

This sequence belongs to the GLYK kinase family.

The protein localises to the plastid. The protein resides in the chloroplast. Its subcellular location is the cytoplasm. The catalysed reaction is (R)-glycerate + ATP = (2R)-3-phosphoglycerate + ADP + H(+). Its pathway is photosynthesis; photorespiration; 3-phospho-D-glycerate from glycine: step 4/4. Functionally, catalyzes the concluding reaction of the photorespiratory C2 cycle, an indispensable ancillary metabolic pathway to the photosynthetic C3 cycle that enables land plants to grow in an oxygen-containing atmosphere. In terms of biological role, cytoplasmic D-glycerate 3-kinase that constitutes a photorespiratory bypass that alleviates fluctuating light-induced photoinhibition. In Arabidopsis thaliana (Mouse-ear cress), this protein is D-glycerate 3-kinase, chloroplastic.